Here is a 433-residue protein sequence, read N- to C-terminus: Urokinase-type plasminogen activator (433 aa).

The first 20 residues, 1 to 20, serve as a signal peptide directing secretion; it reads MRALLAHLLLCVLVVSASKG. The 37-residue stretch at 26-62 folds into the EGF-like domain; that stretch reads VPSDCGCLNGGTCMSNKYFSSIHWCNCPKKFGGQHCE. Intrachain disulfides connect cysteine 30/cysteine 38, cysteine 32/cysteine 50, cysteine 52/cysteine 61, cysteine 69/cysteine 150, cysteine 90/cysteine 132, and cysteine 121/cysteine 145. The tract at residues 33–56 is binds urokinase plasminogen activator surface receptor; sequence LNGGTCMSNKYFSSIHWCNCPKKF. In terms of domain architecture, Kringle spans 69–150; it reads CYEGNGHFYR…RVQECMVHNC (82 aa). Residues 151-177 form a connecting peptide region; the sequence is ADGKKPSSPPEELQFQCGQRTLRPRFK. Serine 157 carries the phosphoserine modification. Disulfide bonds link cysteine 167/cysteine 298, cysteine 208/cysteine 224, cysteine 216/cysteine 287, cysteine 315/cysteine 384, cysteine 347/cysteine 363, and cysteine 374/cysteine 402. Residues 178–426 enclose the Peptidase S1 domain; that stretch reads IVGGEFTTIE…FLPWIHSHTR (249 aa). Active-site charge relay system residues include histidine 223 and aspartate 274. The N-linked (GlcNAc...) asparagine glycan is linked to asparagine 324. Serine 325 is subject to Phosphoserine. Serine 378 acts as the Charge relay system in catalysis.

Belongs to the peptidase S1 family. As to quaternary structure, found in high and low molecular mass forms. Each consists of two chains, A and B. The high molecular mass form contains a long chain A which is cleaved to yield a short chain A. Forms heterodimer with SERPINA5. Binds LRP1B; binding is followed by internalization and degradation. Interacts with MRC2. Interacts with PLAUR. In complex with SERPINE1, interacts with PLAUR/uPAR. Interacts with SORL1 and LRP1, either alone or in complex with SERPINE1; these interactions are abolished in the presence of LRPAP1/RAP. The ternary complex composed of PLAUR-PLAU-PAI1 also interacts with SORLA. Post-translationally, phosphorylation of Ser-157 and Ser-325 abolishes proadhesive ability but does not interfere with receptor binding. Produced as an inactive single-chain protein (pro-uPA or sc-uPA), is processed into the active disulfide-linked two-chain form of PLAU/uPA by a proteolytic event mediated, at least, by TMPRSS4.

It localises to the secreted. The enzyme catalyses Specific cleavage of Arg-|-Val bond in plasminogen to form plasmin.. Inhibited by SERPINA5. Inhibited by SERPINE1. Specifically cleaves the zymogen plasminogen to form the active enzyme plasmin. This is Urokinase-type plasminogen activator (PLAU) from Papio cynocephalus (Yellow baboon).